We begin with the raw amino-acid sequence, 706 residues long: DNA ligase (706 aa).

A disordered region spans residues M1–A20. Residues D50–D54, S99–L100, and E128 contribute to the NAD(+) site. Catalysis depends on K130, which acts as the N6-AMP-lysine intermediate. The NAD(+) site is built by R151, E188, K304, and K328. Zn(2+) contacts are provided by C422, C425, C440, and C446. One can recognise a BRCT domain in the interval E604–P694.

This sequence belongs to the NAD-dependent DNA ligase family. LigA subfamily. The cofactor is Mg(2+). Mn(2+) serves as cofactor.

The enzyme catalyses NAD(+) + (deoxyribonucleotide)n-3'-hydroxyl + 5'-phospho-(deoxyribonucleotide)m = (deoxyribonucleotide)n+m + AMP + beta-nicotinamide D-nucleotide.. In terms of biological role, DNA ligase that catalyzes the formation of phosphodiester linkages between 5'-phosphoryl and 3'-hydroxyl groups in double-stranded DNA using NAD as a coenzyme and as the energy source for the reaction. It is essential for DNA replication and repair of damaged DNA. In Frankia casuarinae (strain DSM 45818 / CECT 9043 / HFP020203 / CcI3), this protein is DNA ligase.